The sequence spans 231 residues: MAGKKVLIVYAHQEPKSFNGSLKKVAVEELSKQGCTVTVSDLYSMNFEPRATRNDITGAPSNPDVFSYGIETHEAYKKKALTSDIFEEQRKVQEADLVIFQFPLYWFSVPAILKGWMDRVLCRGFAFDIPGFYDSGFLKGKLALLSLTTGGTAEMYTKDGVSGDFRYFLWPLQHGTLHFCGFKVLAPQISFGLDVSSEEERKVMLASWAQRLKSIWKEEPIHCTPPWYFQE.

Residues H12, 18–21, and 104–107 contribute to the FAD site; these read FNGS and LYWF. Residue 127 to 129 participates in substrate binding; it reads FDI. Residues 148-151 and Y156 contribute to the FAD site; that span reads TTGG. The Zn(2+) site is built by H174 and H178. D194 lines the FAD pocket. Phosphoserine is present on S197. R201 contributes to the FAD binding site. C223 provides a ligand contact to Zn(2+).

Belongs to the NAD(P)H dehydrogenase (quinone) family. As to quaternary structure, homodimer. It depends on Zn(2+) as a cofactor. FAD is required as a cofactor.

Its subcellular location is the cytoplasm. The enzyme catalyses 1-(beta-D-ribofuranosyl)-1,4-dihydronicotinamide + a quinone + H(+) = beta-nicotinamide D-riboside + a quinol. The enzyme apparently serves as a quinone reductase in connection with conjugation reactions of hydroquinones involved in detoxification pathways as well as in biosynthetic processes such as the vitamin K-dependent gamma-carboxylation of glutamate residues in prothrombin synthesis. The chain is Ribosyldihydronicotinamide dehydrogenase [quinone] (Nqo2) from Mus musculus (Mouse).